The primary structure comprises 274 residues: Trypsin-1 (274 aa).

The N-terminal stretch at 1–18 (MSNKIAILLAVLVAVVAC) is a signal peptide. A propeptide spans 19–47 (AEAQANQRHRLVRPSPSFSPRPRYAVGQR) (activation peptide). One can recognise a Peptidase S1 domain in the interval 48–273 (IVGGFEIDVS…VRDWVRENSG (226 aa)). Cys-73 and Cys-89 form a disulfide bridge. Active-site charge relay system residues include His-88 and Asp-133. Disulfide bonds link Cys-198/Cys-214 and Cys-225/Cys-249. The Charge relay system role is filled by Ser-229.

The protein belongs to the peptidase S1 family. Constitutively expressed at low level in the gut of adult females. Also expressed in the gut of male and female pupae.

Its subcellular location is the secreted. It catalyses the reaction Preferential cleavage: Arg-|-Xaa, Lys-|-Xaa.. In terms of biological role, major function may be to aid in digestion of the blood meal. The sequence is that of Trypsin-1 (TRYP1) from Anopheles gambiae (African malaria mosquito).